Here is a 185-residue protein sequence, read N- to C-terminus: N-alpha-acetyltransferase 30 (185 aa).

The N-acetyltransferase domain maps to 31 to 179; it reads IEYIPYQGES…DAVRLLLPLN (149 aa).

The protein belongs to the acetyltransferase family. MAK3 subfamily.

Functionally, probable catalytic component of a complex displaying alpha (N-terminal) acetyltransferase activity. The protein is N-alpha-acetyltransferase 30 of Dictyostelium discoideum (Social amoeba).